A 462-amino-acid chain; its full sequence is Retinoic acid receptor RXR-alpha (462 aa).

Residues M1–I107 form a disordered region. The interval M1–I134 is modulating. A Glycyl lysine isopeptide (Lys-Gly) (interchain with G-Cter in SUMO2) cross-link involves residue K4. The span at F11 to G24 shows a compositional bias: polar residues. A phosphoserine mark is found at S21 and S27. Residues S49–I58 show a composition bias toward polar residues. Residues S56 and S70 each carry the phosphoserine; by MAPK8 and MAPK9 modification. A compositionally biased stretch (polar residues) spans S78–S104. The residue at position 82 (T82) is a Phosphothreonine; by MAPK8 and MAPK9. K108 is covalently cross-linked (Glycyl lysine isopeptide (Lys-Gly) (interchain with G-Cter in SUMO)). S129 carries the post-translational modification Phosphoserine. Positions 135 and 138 each coordinate Zn(2+). Residues C135–C155 form an NR C4-type zinc finger. Residues C135–M200 constitute a DNA-binding region (nuclear receptor). The residue at position 145 (K145) is an N6-acetyllysine; by EP300. Zn(2+)-binding residues include C152 and C155. The nuclear localization signal stretch occupies residues K160–K165. Residues C171, C177, C187, and C190 each coordinate Zn(2+). The segment at C171 to C195 adopts an NR C4-type zinc-finger fold. Residues K201 to S224 are hinge. Positions Q206–N218 are enriched in basic and acidic residues. The disordered stretch occupies residues Q206–E228. In terms of domain architecture, NR LBD spans N227–P458. S259 carries the post-translational modification Phosphoserine. A Phosphoserine; by MAPK8 and MAPK9 modification is found at S260. R316 and A327 together coordinate 9-cis-retinoate. All-trans-retinoate contacts are provided by R316 and A327. The tract at residues R348–G368 is required for nuclear export.

Belongs to the nuclear hormone receptor family. NR2 subfamily. As to quaternary structure, homodimer. Heterodimer (via C-terminus) with RARA; required for ligand-dependent retinoic acid receptor transcriptional activity; association with RARA is enhanced by pulsatile shear stress. Heterodimer with PPARA (via the leucine-like zipper in the LBD); the interaction is required for PPARA transcriptional activity. Heterodimerizes with PPARG. Heterodimerizes (via NR LBD) with RARB. Heterodimerizes with NR1H4; the heterodimerization enhances the binding affinity for LXXLL motifs from coactivators. Interacts with NCOA3 and NCOA6 coactivators. Interacts with coactivator FAM120B. Interacts with coactivator PELP1, SENP6, SFPQ, DNTTIP2 and RNF8. Interacts with PRMT2. Interacts with ASXL1. Interacts with BHLHE40/DEC1, BHLHE41/DEC2, NCOR1 and NCOR2. Interacts in a ligand-dependent fashion with MED1 and NCOA1. Interacts with VDR. Interacts with EP300; the interaction is decreased by 9-cis retinoic acid. Heterodimer (via C-terminus) with NR4A1 (via DNA-binding domain); DNA-binding of the heterodimer is enhanced by 9-cis retinoic acid. NR4A1 competes with EP300 for interaction with RXRA and thereby attenuates EP300 mediated acetylation of RXRA. In the absence of hormonal ligand, interacts with TACC1. Interacts ith IGFBP3. In terms of assembly, (Microbial infection) Interacts (via the DNA binding domain) with HCV core protein; the interaction enhances the transcriptional activities of the RXRA/RARA and the RXRA/PPARA heterodimers. Post-translationally, acetylated by EP300; acetylation enhances DNA binding and transcriptional activity. Phosphorylated on serine and threonine residues mainly in the N-terminal modulating domain. Constitutively phosphorylated on Ser-21 in the presence or absence of ligand. Under stress conditions, hyperphosphorylated by activated JNK on Ser-56, Ser-70, Thr-82 and Ser-260. Phosphorylated on Ser-27, in vitro, by PKA. This phosphorylation is required for repression of cAMP-mediated transcriptional activity of RARA. In terms of processing, ubiquitinated by UBR5, leading to its degradation: UBR5 specifically recognizes and binds ligand-bound RXRA when it is not associated with coactivators (NCOAs). In presence of NCOAs, the UBR5-degron is not accessible, preventing its ubiquitination and degradation. Post-translationally, sumoylation negatively regulates transcriptional activity. Desumoylated specifically by SENP6. As to expression, expressed in lung fibroblasts (at protein level). Expressed in monocytes. Highly expressed in liver, also found in kidney and brain.

It is found in the nucleus. Its subcellular location is the cytoplasm. The protein resides in the mitochondrion. Functionally, receptor for retinoic acid that acts as a transcription factor. Forms homo- or heterodimers with retinoic acid receptors (RARs) and binds to target response elements in response to their ligands, all-trans or 9-cis retinoic acid, to regulate gene expression in various biological processes. The RAR/RXR heterodimers bind to the retinoic acid response elements (RARE) composed of tandem 5'-AGGTCA-3' sites known as DR1-DR5 to regulate transcription. The high affinity ligand for retinoid X receptors (RXRs) is 9-cis retinoic acid. In the absence of ligand, the RXR-RAR heterodimers associate with a multiprotein complex containing transcription corepressors that induce histone deacetylation, chromatin condensation and transcriptional suppression. On ligand binding, the corepressors dissociate from the receptors and coactivators are recruited leading to transcriptional activation. Serves as a common heterodimeric partner for a number of nuclear receptors, such as RARA, RARB and PPARA. The RXRA/RARB heterodimer can act as a transcriptional repressor or transcriptional activator, depending on the RARE DNA element context. The RXRA/PPARA heterodimer is required for PPARA transcriptional activity on fatty acid oxidation genes such as ACOX1 and the P450 system genes. Together with RARA, positively regulates microRNA-10a expression, thereby inhibiting the GATA6/VCAM1 signaling response to pulsatile shear stress in vascular endothelial cells. Acts as an enhancer of RARA binding to RARE DNA element. May facilitate the nuclear import of heterodimerization partners such as VDR and NR4A1. Promotes myelin debris phagocytosis and remyelination by macrophages. Plays a role in the attenuation of the innate immune system in response to viral infections, possibly by negatively regulating the transcription of antiviral genes such as type I IFN genes. Involved in the regulation of calcium signaling by repressing ITPR2 gene expression, thereby controlling cellular senescence. In Homo sapiens (Human), this protein is Retinoic acid receptor RXR-alpha (RXRA).